The following is a 4678-amino-acid chain: E3 ubiquitin-protein ligase MYCBP2 (4678 aa).

3 disordered regions span residues 87–127 (DRDQ…RSKS), 172–192 (SKNSVQSGESDSDEEEESKEP), and 609–628 (ASKGEDGESTKSRRQSKPYK). Residues 100 to 124 (SRNKKILNKKKLKRKQKSKSKVKTR) show a composition bias toward basic residues. Phosphoserine is present on residues serine 127, serine 178, serine 181, and serine 183. RCC1 repeat units follow at residues 600–655 (DGSI…VISK), 699–755 (NGEV…MMCP), 907–957 (KRDK…VLME), 958–1008 (NGDV…VLLM), and 1010–1066 (GQVF…LRID). Residues 898–910 (RSHPAQLKHKRDK) are compositionally biased toward basic residues. The tract at residues 898–928 (RSHPAQLKHKRDKHKDGSGERGEKDASKITT) is disordered. Residues 911 to 924 (HKDGSGERGEKDAS) show a composition bias toward basic and acidic residues. The interval 1235–1386 (NRFESHGGGW…GQIPQLLYRL (152 aa)) is PHR domain 1. Serine 1624 is modified (phosphoserine). Positions 1726–1884 (NRFTKTSQGR…GQIPQILYYR (159 aa)) are PHR domain 2. Cysteines 1748 and 1863 form a disulfide. Disordered regions lie at residues 1993–2012 (FNPNQSTDSTTGNQPEQGLS) and 2321–2340 (QQDQAKKPQRIPGSPAVTAA). Residues 1994 to 2012 (NPNQSTDSTTGNQPEQGLS) show a composition bias toward polar residues. Residues 2022-2550 (VIESEHPYKP…NQHLGKSLLV (529 aa)) are RAE1 binding. The Filamin repeat unit spans residues 2341-2443 (SSNTDMTYGG…IDAGLEVKVK (103 aa)). Threonine 2683 is modified (phosphothreonine). Disordered stretches follow at residues 2709 to 2931 (LGNS…LHSE), 2943 to 2963 (TNSLTDSTCDDSSEFKSVDEG), 2979 to 3020 (EQEM…EPAK), and 3066 to 3085 (APIRSSLNSQQPTEEKETKL). Positions 2718 to 2733 (NISTSSKPASTSGKSE) are enriched in polar residues. Residues 2742-2760 (LKPDGRMSRTTADQKKPRG) show a composition bias toward basic and acidic residues. Serine 2769 carries the post-translational modification Phosphoserine. A compositionally biased stretch (basic and acidic residues) spans 2775-2785 (DAAKLRSDSHS). Residues 2786-2810 (RSLSPNHNTLQTLKSDGRMPSSSRA) show a composition bias toward polar residues. Phosphoserine occurs at positions 2787, 2789, 2833, 2839, 2869, 2871, and 2920. Low complexity predominate over residues 2828–2843 (PANRSSPSGASSPRSS). Residues 2860–2871 (TKLDPPRERSKS) show a composition bias toward basic and acidic residues. At serine 2985 the chain carries Phosphoserine. Basic residues predominate over residues 2988–3001 (ISRKCANRHTRPKK). 3 positions are modified to phosphoserine: serine 3090, serine 3478, and serine 3505. A disordered region spans residues 3605 to 3631 (PVEPEEEEDEENKTSKENSEQEKDTRV). Over residues 3616-3631 (NKTSKENSEQEKDTRV) the composition is skewed to basic and acidic residues. The region spanning 3719–3897 (SISIQSGFEA…VAQQRNCEAE (179 aa)) is the DOC domain. The interval 3915–3934 (SGDAEPTPEQEEKALLSSPE) is disordered. Threonine 3921 is subject to Phosphothreonine. A phosphoserine mark is found at serine 3931 and serine 3932. Zn(2+)-binding residues include cysteine 4428, cysteine 4431, cysteine 4446, histidine 4448, histidine 4451, cysteine 4454, cysteine 4475, cysteine 4478, cysteine 4544, and cysteine 4547. The RING-type; atypical zinc finger occupies 4428-4479 (CMICFTEALSAAPAIQLDCSHIFHLQCCRRVLENRWLGPRITFGFISCPICK). The tandem cysteine domain stretch occupies residues 4539-4676 (YAYYVCYKCR…LGCGVCRNAH (138 aa)). Residue cysteine 4558 is part of the active site. Zn(2+) contacts are provided by cysteine 4575, cysteine 4578, cysteine 4587, histidine 4590, cysteine 4599, cysteine 4602, and cysteine 4603. Residue cysteine 4610 is part of the active site. Residues cysteine 4617, cysteine 4620, cysteine 4638, cysteine 4652, histidine 4658, cysteine 4669, and cysteine 4672 each coordinate Zn(2+).

The protein belongs to the RING-Cys relay (RCR) family. In terms of assembly, interacts with MYC. Interacts with TSC2 (tuberin) when TSC2 is in complex with TSC1 (hamartin). Interacts with FBXO45. Interacts with RAE1. Interacts with CPNE1 (via VWFA domain) and CPNE4 (via VWFA domain). Interacts with (sumoylated) RANGAP1; interaction with sumoylated RANGAP1 inhibits E3 ubiquitin-protein ligase activity and promotes MYCBP2 translocation to the nucleus. Interacts with RAN. Interacts with ATP13A2; the interaction inhibits the ubiquitination of TSC2 by MYCBP2. Interacts with USP11. Autoubiquitinated. As to expression, expressed in all tissues examined, expression is exceptionally abundant in brain and thymus. Colocalizes with TSC1 and TSC2 along the neurites and in the growth cones. Highly expressed in peripheral and central neurons. Colocalized with TSC1 in one of the filopodial extensions at the tip of a growth cone.

The protein localises to the nucleus. It is found in the cell projection. Its subcellular location is the axon. It localises to the cytoplasm. The protein resides in the cytoskeleton. The enzyme catalyses [E2 ubiquitin-conjugating enzyme]-S-ubiquitinyl-L-cysteine + [acceptor protein]-L-threonine = [E2 ubiquitin-conjugating enzyme]-L-cysteine + [acceptor protein]-3-O-ubiquitinyl-L-threonine.. The protein operates within protein modification; protein ubiquitination. Functionally, atypical E3 ubiquitin-protein ligase which specifically mediates ubiquitination of threonine and serine residues on target proteins, instead of ubiquitinating lysine residues. Shows esterification activity towards both threonine and serine, with a preference for threonine, and acts via two essential catalytic cysteine residues that relay ubiquitin to its substrate via thioester intermediates. Interacts with the E2 enzymes UBE2D1, UBE2D3, UBE2E1 and UBE2L3. Plays a key role in neural development, probably by mediating ubiquitination of threonine residues on target proteins. Involved in different processes such as regulation of neurite outgrowth, synaptic growth, synaptogenesis and axon degeneration. Required for the formation of major central nervous system axon tracts. Required for proper axon growth by regulating axon navigation and axon branching: acts by regulating the subcellular location and stability of MAP3K12/DLK. Required for proper localization of retinogeniculate projections but not for eye-specific segregation. Regulates axon guidance in the olfactory system. Involved in Wallerian axon degeneration, an evolutionarily conserved process that drives the loss of damaged axons: acts by promoting destabilization of NMNAT2, probably via ubiquitination of NMNAT2. Catalyzes ubiquitination of threonine and/or serine residues on NMNAT2, consequences of threonine and/or serine ubiquitination are however unknown. Regulates the internalization of TRPV1 in peripheral sensory neurons. Mediates ubiquitination and subsequent proteasomal degradation of TSC2/tuberin. Independently of the E3 ubiquitin-protein ligase activity, also acts as a guanosine exchange factor (GEF) for RAN in neurons of dorsal root ganglia. May function as a facilitator or regulator of transcriptional activation by MYC. Acts in concert with HUWE1 to regulate the circadian clock gene expression by promoting the lithium-induced ubiquination and degradation of NR1D1. In Homo sapiens (Human), this protein is E3 ubiquitin-protein ligase MYCBP2.